Consider the following 421-residue polypeptide: MHDAVTRPTPPADATAWPRRITQAVKIGGVTVGGGHPVVVQSMTNTDTADIAGSVKQVADLWRAGSEMVRLTVNNAESAAAIPRIVDKLRMMGIDVPLIGDFHYNGHQLLAAEPACAEALAKYRINPGNVGFGKKKDLQFGQLIECAIKYDKPVRIGANWGSLDQSLAAQLMDENAQRETPWDAGRVLREALIRSALDSAERAVELGLPRERIILSAKVSGVQELIAVYRDMASRCDFALHLGLTEAGIGSKGIVASAAALSVLLQEGIGDTIRISLTPEPGQSRTHEVIVAQELLQTTGQRAFTPMVTACPGCGRTTSEFFQELAGVVQNHVRAKMPEWKITNPGAENMTLAVMGCVVNGPGESRHANIGISLPGTGEAPSAPVFIDGEKSVILRGENIAQEFIGLIDQYVERTYARRAG.

The [4Fe-4S] cluster site is built by Cys311, Cys314, Cys357, and Glu364.

This sequence belongs to the IspG family. It depends on [4Fe-4S] cluster as a cofactor.

The catalysed reaction is (2E)-4-hydroxy-3-methylbut-2-enyl diphosphate + oxidized [flavodoxin] + H2O + 2 H(+) = 2-C-methyl-D-erythritol 2,4-cyclic diphosphate + reduced [flavodoxin]. It participates in isoprenoid biosynthesis; isopentenyl diphosphate biosynthesis via DXP pathway; isopentenyl diphosphate from 1-deoxy-D-xylulose 5-phosphate: step 5/6. In terms of biological role, converts 2C-methyl-D-erythritol 2,4-cyclodiphosphate (ME-2,4cPP) into 1-hydroxy-2-methyl-2-(E)-butenyl 4-diphosphate. The polypeptide is 4-hydroxy-3-methylbut-2-en-1-yl diphosphate synthase (flavodoxin) (Xanthomonas oryzae pv. oryzae (strain MAFF 311018)).